Consider the following 459-residue polypeptide: MTLTFSSSAATVAVAAATVTSSARVPVYPLASSTLRGLVSFRLTAKKLFLPPLRSRGGVSVRAMSELVQDKESSVAASIAFNEAAGETPSELSHSRTFLDARSEQDLLSGIKKEAEAGRLPANVAAGMEELYWNYKNAVLSSGASRADETVVSNMSVAFDRMLLGVEDPYTFNPYHKAVREPFDYYMFVHTYIRPLIDFKNSYVGNASIFSELEDKIRQGHNIVLISNHQSEADPAVISLLLEAQSPFIGENIKCVAGDRVITDPLCKPFSMGRNLICVYSKKHMNDDPELVDMKRKANTRSLKEMATMLRSGGQLIWIAPSGGRDRPNPSTGEWFPAPFDASSVDNMRRLVEHSGAPGHIYPMSLLCYDIMPPPPQVEKEIGEKRLVGFHGTGLSIAPEINFSDVTADCESPNEAKEAYSQALYKSVNEQYEILNSAIKHRRGVEASTSRVSLSQPWN.

Residues 1–90 (MTLTFSSSAA…FNEAAGETPS (90 aa)) constitute a chloroplast transit peptide. Positions 229-234 (HQSEAD) match the HXXXXD motif motif.

The protein belongs to the GPAT/DAPAT family.

Its subcellular location is the plastid. The protein localises to the chloroplast stroma. It carries out the reaction sn-glycerol 3-phosphate + an acyl-CoA = a 1-acyl-sn-glycero-3-phosphate + CoA. It participates in phospholipid metabolism; CDP-diacylglycerol biosynthesis; CDP-diacylglycerol from sn-glycerol 3-phosphate: step 1/3. Functionally, esterifies acyl-group from acyl-ACP to the sn-1 position of glycerol-3-phosphate. The enzyme from chilling-resistant plants discriminates against non-fluid palmitic acid and selects oleic acid whereas the enzyme from sensitive plants accepts both fatty acids. This is an oleate-selective acyltransferase. The polypeptide is Glycerol-3-phosphate acyltransferase, chloroplastic (ATS1) (Arabidopsis thaliana (Mouse-ear cress)).